We begin with the raw amino-acid sequence, 157 residues long: Protein UXT (157 aa).

Belongs to the UXT family. In terms of assembly, homohexamer. Component of the PAQosome complex which is responsible for the biogenesis of several protein complexes and which consists of R2TP complex members RUVBL1, RUVBL2, RPAP3 and PIH1D1, URI complex members PFDN2, PFDN6, PDRG1, UXT and URI1 as well as ASDURF, POLR2E and DNAAF10/WDR92. Interacts with LRPPRC. Interacts with androgen receptor AR (via N-terminus). Interacts with estrogen receptor ESR1; the interaction relocalizes ESR1 from the nucleus to the cytoplasm. In the nucleus, interacts specifically with RELA (via RHD domain) and forms a dynamic complex with NF-kappa-B and is recruited to the NF-kappa-B enhanceosome upon stimulation. Interacts with MECOM. Interacts with URI1. Part of complex I composed of TNF-alpha receptor TNFRSF1A, TRADD, TRAF2 and RIPK1 formed in response to TNF-alpha stimulation. Within the complex, interacts (via TPQE motif) with TRAF2; the interaction prevents the recruitment of FADD and CASP8/caspase 8 to complex I. In terms of processing, ubiquitinated by E3 ubiquitin-protein ligase complex containing FBXO7; leading to proteasomal degradation. Ubiquitous. Expressed in prostate epithelial cells. Expressed in mammary epithelial cells. Highest levels in the heart, skeletal muscle, pancreas, kidney, liver, adrenal gland, peripheral blood leukocytes, lymph node, prostate, and thyroid and the lowest levels in bladder and uterus. Overexpressed in a number of tumor tissues.

The protein localises to the cytoplasm. It localises to the nucleus. Its subcellular location is the cytoskeleton. It is found in the microtubule organizing center. The protein resides in the centrosome. The protein localises to the spindle pole. In terms of biological role, involved in gene transcription regulation. Acts in concert with the corepressor URI1 to regulate androgen receptor AR-mediated transcription. Together with URI1, associates with chromatin to the NKX3-1 promoter region. Negatively regulates the transcriptional activity of the estrogen receptor ESR1 by inducing its translocation into the cytoplasm. May act as nuclear chaperone that facilitates the formation of the NF-kappa-B enhanceosome and thus positively regulates NF-kappa-B transcription activity. Potential component of mitochondrial-associated LRPPRC, a multidomain organizer that potentially integrates mitochondria and the microtubular cytoskeleton with chromosome remodeling. Increasing concentrations of UXT contributes to progressive aggregation of mitochondria and cell death potentially through its association with LRPPRC. Suppresses cell transformation and it might mediate this function by interaction and inhibition of the biological activity of cell proliferation and survival stimulatory factors like MECOM. Its function is as follows. Plays a role in protecting cells against TNF-alpha-induced apoptosis by preventing the recruitment of FADD and caspase 8 to the apoptotic complex I, composed of TRADD, TRAF2 and RIPK1/RIP. This chain is Protein UXT (UXT), found in Homo sapiens (Human).